A 120-amino-acid polypeptide reads, in one-letter code: Large ribosomal subunit protein bL19c (120 aa).

Belongs to the bacterial ribosomal protein bL19 family.

It is found in the plastid. The protein localises to the chloroplast. This chain is Large ribosomal subunit protein bL19c, found in Phaeodactylum tricornutum (strain CCAP 1055/1).